A 444-amino-acid chain; its full sequence is DNA primase DnaG (444 aa).

In terms of domain architecture, Toprim spans 186–260; that stretch reads DSIIVVEGRN…EVDFVARAPP (75 aa). Residues Glu-192, Asp-234, and Asp-236 each contribute to the Mg(2+) site.

This sequence belongs to the archaeal DnaG primase family. As to quaternary structure, forms a ternary complex with MCM helicase and DNA. Component of the archaeal exosome complex. The cofactor is Mg(2+).

It catalyses the reaction ssDNA + n NTP = ssDNA/pppN(pN)n-1 hybrid + (n-1) diphosphate.. Its function is as follows. RNA polymerase that catalyzes the synthesis of short RNA molecules used as primers for DNA polymerase during DNA replication. Also part of the exosome, which is a complex involved in RNA degradation. Acts as a poly(A)-binding protein that enhances the interaction between heteromeric, adenine-rich transcripts and the exosome. This is DNA primase DnaG from Thermoplasma volcanium (strain ATCC 51530 / DSM 4299 / JCM 9571 / NBRC 15438 / GSS1).